The chain runs to 402 residues: Propionate kinase (402 aa).

ATP is bound by residues Asn11 and Lys18. Asn11 contributes to the Mg(2+) binding site. Arg86 serves as a coordination point for substrate. Residue Asp143 is the Proton donor/acceptor of the active site. ATP is bound by residues His175, 203–207 (HLGNG), 278–280 (DLR), and 326–330 (GIGEN).

It belongs to the acetokinase family. TdcD subfamily. As to quaternary structure, homodimer. Mg(2+) serves as cofactor.

The catalysed reaction is propanoate + ATP = propanoyl phosphate + ADP. The protein operates within amino-acid degradation; L-threonine degradation via propanoate pathway; propanoate from L-threonine: step 4/4. Catalyzes the conversion of propionyl phosphate and ADP to propionate and ATP. The protein is Propionate kinase of Salmonella typhimurium (strain D23580).